Reading from the N-terminus, the 187-residue chain is GMP synthase [glutamine-hydrolyzing] subunit A (187 aa).

The Glutamine amidotransferase type-1 domain occupies 1–187 (MILIIDNHGQ…KNFAKLCGEL (187 aa)). Catalysis depends on C76, which acts as the Nucleophile. Active-site residues include H164 and E166.

As to quaternary structure, heterodimer composed of a glutamine amidotransferase subunit (A) and a GMP-binding subunit (B).

The enzyme catalyses XMP + L-glutamine + ATP + H2O = GMP + L-glutamate + AMP + diphosphate + 2 H(+). Its pathway is purine metabolism; GMP biosynthesis; GMP from XMP (L-Gln route): step 1/1. Catalyzes the synthesis of GMP from XMP. This is GMP synthase [glutamine-hydrolyzing] subunit A from Methanopyrus kandleri (strain AV19 / DSM 6324 / JCM 9639 / NBRC 100938).